The primary structure comprises 209 residues: COP9 signalosome complex subunit 8 (209 aa).

Residues 8-179 (DNAFSFRKLL…GALDVSLNRF (172 aa)) form the PCI domain. Residue Ser-175 is modified to Phosphoserine.

This sequence belongs to the CSN8 family. In terms of assembly, component of the CSN complex, composed of COPS1/GPS1, COPS2, COPS3, COPS4, COPS5, COPS6, COPS7 (COPS7A or COPS7B), COPS8 and COPS9. In the complex, it probably interacts directly with COPS3, COPS4 and COPS7 (COPS7A or COPS7B).

The protein resides in the cytoplasm. Its subcellular location is the nucleus. Its function is as follows. Component of the COP9 signalosome complex (CSN), a complex involved in various cellular and developmental processes. The CSN complex is an essential regulator of the ubiquitin (Ubl) conjugation pathway by mediating the deneddylation of the cullin subunits of SCF-type E3 ligase complexes, leading to decrease the Ubl ligase activity of SCF-type complexes such as SCF, CSA or DDB2. The complex is also involved in phosphorylation of p53/TP53, c-jun/JUN, IkappaBalpha/NFKBIA, ITPK1 and IRF8/ICSBP, possibly via its association with CK2 and PKD kinases. CSN-dependent phosphorylation of TP53 and JUN promotes and protects degradation by the Ubl system, respectively. This is COP9 signalosome complex subunit 8 (Cops8) from Rattus norvegicus (Rat).